The sequence spans 285 residues: Chitinase 4 (285 aa).

Positions 1–27 (MAAKMATMVALVFGLALLLSAAAPAAA) are cleaved as a signal peptide. The region spanning 28–62 (QNCGCQDGYCCSQWGYCGTTEAYCGQGCQSGPCWG) is the Chitin-binding type-1 domain. 7 disulfides stabilise this stretch: Cys-30-Cys-38, Cys-32-Cys-44, Cys-37-Cys-51, Cys-55-Cys-60, Cys-104-Cys-153, Cys-166-Cys-175, and Cys-253-Cys-285. Glu-148 serves as the catalytic Proton donor.

Belongs to the glycosyl hydrolase 19 family. Chitinase class IV subfamily. As to expression, expressed at low levels in leaves, sheaths and meristems.

It catalyses the reaction Random endo-hydrolysis of N-acetyl-beta-D-glucosaminide (1-&gt;4)-beta-linkages in chitin and chitodextrins.. Hydrolyzes chitin and may function in reproductive organs during embryogenesis and seed maturation. In Oryza sativa subsp. japonica (Rice), this protein is Chitinase 4 (Cht4).